The following is a 225-amino-acid chain: Acidic leucine-rich nuclear phosphoprotein 32-related protein 2 (225 aa).

3 LRR repeats span residues 39–60 (KLEL…PVLP), 61–82 (ALNY…DVLI), and 87–107 (EIKK…RTLK). The 41-residue stretch at 121-161 (SSLGLLDDYRVKMFEMIPSLKILDGCDVDGEEVEEEFAAGE) folds into the LRRCT domain. Acidic residues predominate over residues 155–175 (EEFAAGEGAEDSDEGDSDEDG). The interval 155-225 (EEFAAGEGAE…DEPEAKKSAE (71 aa)) is disordered.

The protein belongs to the ANP32 family.

In Caenorhabditis elegans, this protein is Acidic leucine-rich nuclear phosphoprotein 32-related protein 2.